A 237-amino-acid polypeptide reads, in one-letter code: N-(5'-phosphoribosyl)anthranilate isomerase (237 aa).

This sequence belongs to the TrpF family.

The catalysed reaction is N-(5-phospho-beta-D-ribosyl)anthranilate = 1-(2-carboxyphenylamino)-1-deoxy-D-ribulose 5-phosphate. It functions in the pathway amino-acid biosynthesis; L-tryptophan biosynthesis; L-tryptophan from chorismate: step 3/5. This is N-(5'-phosphoribosyl)anthranilate isomerase from Desulfitobacterium hafniense (strain DSM 10664 / DCB-2).